The primary structure comprises 334 residues: Serpentine receptor class alpha-11 (334 aa).

The Extracellular segment spans residues 1–23 (MTTNNPVCASDAHMEMYSSKLYT). A helical membrane pass occupies residues 24–44 (SALFLNLIIATTSMILTGFAI). Topologically, residues 45–57 (QKLFMESIINIST) are cytoplasmic. A helical membrane pass occupies residues 58–80 (RMFLFCGLMCCSLHQTAYIVLRI). Residues 81–105 (QVIYQVFFKLSEPCNLYYPAIDCKY) are Extracellular-facing. The helical transmembrane segment at 106 to 126 (VTFSLVAGNTGMIFIQSAMTI) threads the bilayer. Residues 127–145 (DRIFATIFPKLWPKLKYWP) are Cytoplasmic-facing. A helical membrane pass occupies residues 146–166 (GVVLSILMIACNYANVQIIFW). The Extracellular segment spans residues 167 to 191 (GDPLTEYVPTCGQFPSKSVNRFQTF). Residues 192–212 (LAIALYMSIAHMVINVIILYI) traverse the membrane as a helical segment. Topologically, residues 213–239 (NVLQDRQQSKSFNVNQRYQSREALKSS) are cytoplasmic. Residues 240 to 260 (QAIFFLSMSQFFACLIYSVFT) traverse the membrane as a helical segment. At 261-277 (KVFLEFQLNLSPLQSGL) the chain is on the extracellular side. The helical transmembrane segment at 278 to 298 (VLALSYTTPYACIAIPSLIIF) threads the bilayer. At 299-334 (TFRFIKNQRLRNINELRSQTETGDECMRKIAKIWEK) the chain is on the cytoplasmic side.

Belongs to the nematode receptor-like protein sra family. In terms of tissue distribution, expressed in interneurons AIY and AVB in L1 larvae. In adults, strong expression is seen in AIY and AIA but only weak expression in AVB.

It localises to the membrane. Functionally, a G protein-coupled receptor required for olfactory imprinting a requisite in ordorant response such as benzaldehyde and isoamylalcohol. The chain is Serpentine receptor class alpha-11 (sra-11) from Caenorhabditis elegans.